We begin with the raw amino-acid sequence, 485 residues long: MLGPPSREKWSSDFPRWFDWVIETAEVYDYGRYPVKGMGVWMPYGFQIRRRVLEVVRGLLDSTGHEEVLFPLLIPEHLLRRESEHIRGFEGEVYWVTHGGREELDVKLALRPTSETSITYMETFWIKSYRQLPKKYYQVVSIFRYETKATRPMIRLREVTTFKEAHTVHESFEDAERQVLEAIEVYKAIFDRLLIPYVISKRPEWDKFAGALYTIAFDTIMPDGRALQIGTVHHLGQSFTRAFDFRIQMRDERLDHPWQTSYGVSDRVVASLIAVHGDDRGLVIPPSVAPIQVVVIPITPGDEEKRGKVLTYTAKAAEALEKAGLRVHVDDREWERPGAKFYYWEAKGVPIRVEIGLREAEQDTLTIARRDTLEKTEVPLGEAGNRIRELMAQIESSMRERAKSFFGERLLRTESLEEARDWVEGRRGIAEIPWCGRESCGLEMEERVNGKVLGTPWPEEPVEEGKRCPLCGRPAVAWIRLAKTY.

This sequence belongs to the class-II aminoacyl-tRNA synthetase family. ProS type 3 subfamily. As to quaternary structure, homodimer.

It is found in the cytoplasm. It carries out the reaction tRNA(Pro) + L-proline + ATP = L-prolyl-tRNA(Pro) + AMP + diphosphate. Functionally, catalyzes the attachment of proline to tRNA(Pro) in a two-step reaction: proline is first activated by ATP to form Pro-AMP and then transferred to the acceptor end of tRNA(Pro). The chain is Proline--tRNA ligase from Aeropyrum pernix (strain ATCC 700893 / DSM 11879 / JCM 9820 / NBRC 100138 / K1).